Reading from the N-terminus, the 470-residue chain is MGIMELFSPIAIAVLGSCVLFLFSRLKNLLGPPCIQGWIPWIGAGLEFGKAPLEFIEKARIKYGPVFTIFAMGNRMTFVSEEEGINVLLKSEHVDFESAVQSPVYHTAWIPKNVFSALHERLYALMKGKMGTFNTHHFTGPLTEELHEQLEGLGTHGTMDLNDFVRYLLYPATLNTLFKKGLFLTDKRTIKEFYQQFKTYDEGFEYGSQLPEWLLRNWSKSKRWLLALFEKNIGNIKAHGSAGHSGTLLQAILEVVETETRQYSPNYGLVVLWAALANAPPIAFWTLGYILSHPDIHRTVLESISSVFGTAGKDKIKVSEDDLKKLLIIKWCILESVRLRAPGVITRKVVKPVKILNHTVPSGDLLMLSPFWLHRNPKYFPEPESFKPERWKEANLDKYIFLDYFMAFGGGKFQCPGRWFALLEIQLCIILVLYKYECSLLDPLPKQSSRHLVGVPQPAGKCRIEYKQRA.

The next 2 helical transmembrane spans lie at 3–23 (IMEL…LFLF) and 270–290 (VVLW…LGYI). Cysteine 415 lines the heme pocket.

The protein belongs to the cytochrome P450 family. Requires heme as cofactor. Liver specific. Hepatic expression is sexually dimorphic (female &gt; male).

It localises to the endoplasmic reticulum membrane. The protein localises to the microsome membrane. It carries out the reaction (24S)-hydroxycholesterol + reduced [NADPH--hemoprotein reductase] + O2 = (24S)-7alpha-dihydroxycholesterol + oxidized [NADPH--hemoprotein reductase] + H2O + H(+). It participates in steroid metabolism; cholesterol degradation. Its pathway is lipid metabolism; bile acid biosynthesis. A cytochrome P450 monooxygenase involved in neural cholesterol clearance through bile acid synthesis. Catalyzes 7-alpha hydroxylation of (24S)-hydroxycholesterol, a neural oxysterol that is metabolized to bile acids in the liver. Mechanistically, uses molecular oxygen inserting one oxygen atom into a substrate, and reducing the second into a water molecule, with two electrons provided by NADPH via cytochrome P450 reductase (CPR; NADPH-ferrihemoprotein reductase). The protein is 24-hydroxycholesterol 7-alpha-hydroxylase (Cyp39a1) of Mus musculus (Mouse).